Consider the following 751-residue polypeptide: Catalase-peroxidase (751 aa).

A cross-link (tryptophyl-tyrosyl-methioninium (Trp-Tyr) (with M-266)) is located at residues 92-240 (WHSAGTYRVT…VAAAHMGLIY (149 aa)). His93 (proton acceptor) is an active-site residue. Positions 240–266 (YVNPEGPDGVPDPIAAARDIRTTFHRM) form a cross-link, tryptophyl-tyrosyl-methioninium (Tyr-Met) (with W-92). Residue His281 participates in heme b binding.

This sequence belongs to the peroxidase family. Peroxidase/catalase subfamily. In terms of assembly, homodimer or homotetramer. Heme b serves as cofactor. Post-translationally, formation of the three residue Trp-Tyr-Met cross-link is important for the catalase, but not the peroxidase activity of the enzyme.

It localises to the cytoplasm. The enzyme catalyses H2O2 + AH2 = A + 2 H2O. It catalyses the reaction 2 H2O2 = O2 + 2 H2O. Bifunctional enzyme with both catalase and broad-spectrum peroxidase activity. The protein is Catalase-peroxidase of Phaeosphaeria nodorum (strain SN15 / ATCC MYA-4574 / FGSC 10173) (Glume blotch fungus).